We begin with the raw amino-acid sequence, 1438 residues long: Membrane-anchored lipid-binding protein YSP2 (1438 aa).

Basic and acidic residues predominate over residues 1-17 (MRDEATRKKRSFSDGHF). Disordered stretches follow at residues 1 to 97 (MRDE…SHTP), 174 to 194 (KVKHTDTKNTFNSSSSENERP), 200 to 219 (QKDDSQSSSHPAIDSMSAPN), 285 to 308 (QQQHPLSQQQGPLPVSENANQNPN), 338 to 418 (TSGP…KVKF), 455 to 485 (DENNTNNNPNASSTNLSHISKSNVNNNLGPK), and 505 to 543 (SQSNLSSHRARSKTLPANKALENAVGDEGNSKRNSRYSS). Topologically, residues 1 to 1277 (MRDEATRKKR…SAFSMLQQVN (1277 aa)) are cytoplasmic. Position 13 is a phosphoserine (Ser-13). A compositionally biased stretch (basic residues) spans 18-29 (FKKLKLMSRKKQ). A compositionally biased stretch (basic and acidic residues) spans 30 to 44 (PVMERSKTTRTRKES). The span at 45-58 (TNSAAKSSLSLRRA) shows a compositional bias: low complexity. Polar residues predominate over residues 74 to 97 (IGSTNEGVAGNSGSNSPAQYSHTP). Low complexity-rich tracts occupy residues 286 to 298 (QQHPLSQQQGPLP) and 374 to 398 (PTNTSTTPLSGSLTPNNRNVNANSN). Residue Ser-411 is modified to Phosphoserine. Low complexity predominate over residues 455 to 470 (DENNTNNNPNASSTNL). Polar residues predominate over residues 471-485 (SHISKSNVNNNLGPK). The residue at position 596 (Ser-596) is a Phosphoserine. The 69-residue stretch at 648–716 (EFHTLFKDCD…KEIVQIEKKT (69 aa)) folds into the GRAM domain. The interval 777–843 (SSSAFFDDSD…LGPNKHSPTT (67 aa)) is disordered. Acidic residues predominate over residues 783 to 800 (DDSDDNDDDGDLDDDDPD). Polar residues predominate over residues 818–832 (NESNDLGKNQKSTNY). The 168-residue stretch at 851–1018 (NDHLVIEANI…EIKKILSDED (168 aa)) folds into the VASt 1 domain. Ser-1032 carries the post-translational modification Phosphoserine. One can recognise a VASt 2 domain in the interval 1059-1225 (DDTVIDEKIN…DLKKIISNAS (167 aa)). Residues 1225–1257 (SSTKKKSRRRGKTVNKRKSSPSTIKNEKNEENF) are disordered. Positions 1227–1243 (TKKKSRRRGKTVNKRKS) are enriched in basic residues. Residues 1278–1298 (ITSVQGIMTIISFFICLIFFF) form a helical membrane-spanning segment. Over 1299–1438 (RLLFHSKNTS…DNTSATNQLL (140 aa)) the chain is Lumenal. Residues Asn-1306, Asn-1373, and Asn-1430 are each glycosylated (N-linked (GlcNAc...) asparagine).

The protein belongs to the YSP2 family.

The protein resides in the mitochondrion membrane. It is found in the endoplasmic reticulum membrane. Its function is as follows. Involved in induction of programmed cell death in response to reactive oxygen species (ROS). May be involved in sterol transfer between intracellular membranes. The chain is Membrane-anchored lipid-binding protein YSP2 from Saccharomyces cerevisiae (strain ATCC 204508 / S288c) (Baker's yeast).